The sequence spans 235 residues: Probable RNA 2'-phosphotransferase (235 aa).

Belongs to the KptA/TPT1 family.

In terms of biological role, removes the 2'-phosphate from RNA via an intermediate in which the phosphate is ADP-ribosylated by NAD followed by a presumed transesterification to release the RNA and generate ADP-ribose 1''-2''-cyclic phosphate (APPR&gt;P). May function as an ADP-ribosylase. This chain is Probable RNA 2'-phosphotransferase, found in Thermoplasma volcanium (strain ATCC 51530 / DSM 4299 / JCM 9571 / NBRC 15438 / GSS1).